Consider the following 402-residue polypeptide: Multidrug resistance protein MdtH (402 aa).

11 consecutive transmembrane segments (helical) span residues 13-33 (YFLL…FPLI), 45-65 (ALMV…LGIF), 99-116 (PWLL…GTLF), 139-159 (LLMM…SWLL), 165-185 (LVCA…AWLL), 214-234 (VLTL…LPIM), 244-264 (AVKW…YPIA), 277-297 (LMAG…VGNL), 300-322 (LFTL…ETLS), 340-360 (LGLA…FDMG), and 368-388 (LPWM…GWQF).

It belongs to the major facilitator superfamily. DHA1 family. MdtH (TC 2.A.1.2.21) subfamily.

It localises to the cell inner membrane. The protein is Multidrug resistance protein MdtH of Citrobacter koseri (strain ATCC BAA-895 / CDC 4225-83 / SGSC4696).